A 248-amino-acid polypeptide reads, in one-letter code: Large ribosomal subunit protein uL4 (248 aa).

The segment at 69–92 is disordered; sequence HVPRLKNGSRAAKVPQAKGGREAH.

It belongs to the universal ribosomal protein uL4 family. In terms of assembly, part of the 50S ribosomal subunit.

In terms of biological role, one of the primary rRNA binding proteins, this protein initially binds near the 5'-end of the 23S rRNA. It is important during the early stages of 50S assembly. It makes multiple contacts with different domains of the 23S rRNA in the assembled 50S subunit and ribosome. Functionally, forms part of the polypeptide exit tunnel. The polypeptide is Large ribosomal subunit protein uL4 (Methanoregula boonei (strain DSM 21154 / JCM 14090 / 6A8)).